The chain runs to 876 residues: Leucine--tRNA ligase (876 aa).

A 'HIGH' region motif is present at residues 43–53 (PYPSGRIHMGH). The 'KMSKS' region motif lies at 632–636 (KMSKS). Lysine 635 lines the ATP pocket.

This sequence belongs to the class-I aminoacyl-tRNA synthetase family.

It is found in the cytoplasm. The enzyme catalyses tRNA(Leu) + L-leucine + ATP = L-leucyl-tRNA(Leu) + AMP + diphosphate. This Rhizobium etli (strain ATCC 51251 / DSM 11541 / JCM 21823 / NBRC 15573 / CFN 42) protein is Leucine--tRNA ligase.